The primary structure comprises 410 residues: Calsequestrin-2 (410 aa).

A signal peptide spans 1-19; the sequence is MKRTHLFIAGLYLLASCRA. A calcium regulated hydrophobic site region spans residues 221 to 242; the sequence is MDEPIAIPDKPYTEEELVEFVK. At tyrosine 282 the chain carries Phosphotyrosine. Residues asparagine 335 and asparagine 395 are each glycosylated (N-linked (GlcNAc...) asparagine). The disordered stretch occupies residues 364–410; it reads DVLSGKINTEDDDNEEGDDGDDDEDDDDDDGNNSDEESNDDSDDDDE. A compositionally biased stretch (acidic residues) spans 373–410; sequence EDDDNEEGDDGDDDEDDDDDDGNNSDEESNDDSDDDDE. Residues serine 397, serine 401, and serine 405 each carry the phosphoserine; by CK2 modification.

The protein belongs to the calsequestrin family. Interacts with ASPH. Monomer, homodimer and homooligomer. Mostly monomeric in the absence of calcium. Forms higher oligomers in a calcium-dependent manner. Dimers associate to form tetramers, that then form linear homomer chains. Interacts with TRDN. In terms of processing, phosphorylation in the C-terminus, probably by CK2, moderately increases calcium buffering capacity. Post-translationally, N-glycosylated. In terms of tissue distribution, detected in heart muscle (at protein level).

It is found in the sarcoplasmic reticulum lumen. Its function is as follows. Calsequestrin is a high-capacity, moderate affinity, calcium-binding protein and thus acts as an internal calcium store in muscle. Calcium ions are bound by clusters of acidic residues at the protein surface, especially at the interface between subunits. Can bind around 60 Ca(2+) ions. Regulates the release of lumenal Ca(2+) via the calcium release channel RYR2; this plays an important role in triggering muscle contraction. Plays a role in excitation-contraction coupling in the heart and in regulating the rate of heart beats. The polypeptide is Calsequestrin-2 (CASQ2) (Canis lupus familiaris (Dog)).